We begin with the raw amino-acid sequence, 336 residues long: Tetraacyldisaccharide 4'-kinase (336 aa).

60-67 provides a ligand contact to ATP; that stretch reads TVGGTGKT.

It belongs to the LpxK family.

It carries out the reaction a lipid A disaccharide + ATP = a lipid IVA + ADP + H(+). It functions in the pathway glycolipid biosynthesis; lipid IV(A) biosynthesis; lipid IV(A) from (3R)-3-hydroxytetradecanoyl-[acyl-carrier-protein] and UDP-N-acetyl-alpha-D-glucosamine: step 6/6. Transfers the gamma-phosphate of ATP to the 4'-position of a tetraacyldisaccharide 1-phosphate intermediate (termed DS-1-P) to form tetraacyldisaccharide 1,4'-bis-phosphate (lipid IVA). The chain is Tetraacyldisaccharide 4'-kinase from Pseudomonas fluorescens (strain Pf0-1).